Reading from the N-terminus, the 378-residue chain is Probable pectin lyase A (378 aa).

A signal peptide spans Met-1 to Ala-19. Disulfide bonds link Cys-82–Cys-101 and Cys-91–Cys-225. The active site involves Arg-255. An intrachain disulfide couples Cys-321 to Cys-329.

Belongs to the polysaccharide lyase 1 family.

The protein resides in the secreted. The catalysed reaction is Eliminative cleavage of (1-&gt;4)-alpha-D-galacturonan methyl ester to give oligosaccharides with 4-deoxy-6-O-methyl-alpha-D-galact-4-enuronosyl groups at their non-reducing ends.. Its function is as follows. Pectinolytic enzymes consist of four classes of enzymes: pectin lyase, polygalacturonase, pectin methylesterase and rhamnogalacturonase. Among pectinolytic enzymes, pectin lyase is the most important in depolymerization of pectin, since it cleaves internal glycosidic bonds of highly methylated pectins. This chain is Probable pectin lyase A (pelA), found in Aspergillus terreus (strain NIH 2624 / FGSC A1156).